The following is a 500-amino-acid chain: Ent-cassadiene C11-alpha-hydroxylase 1 (500 aa).

A helical membrane pass occupies residues 4–24; sequence SQVWLLWGALSVAVLFYLSTL. Heme is bound at residue Cys-442.

Belongs to the cytochrome P450 family. Heme serves as cofactor.

The protein resides in the membrane. It catalyses the reaction ent-cassa-12,15-diene + reduced [NADPH--hemoprotein reductase] + O2 = ent-11beta-hydroxycassa-12,15-diene + oxidized [NADPH--hemoprotein reductase] + H2O + H(+). Its function is as follows. Enzyme of the diterpenoid metabolism involved in the biosynthesis of antibacterial oryzalides such as phytocassane. Can use ent-cassadiene as substrate, but not C11-alpha-hydroxy-ent-cassadiene, ent-pimaradiene, ent-sandaracopimaradiene, ent-kaurene, ent-isokaurene, syn-pimaradiene, syn-stemarene, syn-stemodene. This chain is Ent-cassadiene C11-alpha-hydroxylase 1, found in Oryza sativa subsp. japonica (Rice).